The chain runs to 118 residues: Large ribosomal subunit protein uL18 (118 aa).

Belongs to the universal ribosomal protein uL18 family. Part of the 50S ribosomal subunit; part of the 5S rRNA/L5/L18/L25 subcomplex. Contacts the 5S and 23S rRNAs.

This is one of the proteins that bind and probably mediate the attachment of the 5S RNA into the large ribosomal subunit, where it forms part of the central protuberance. This is Large ribosomal subunit protein uL18 from Wolinella succinogenes (strain ATCC 29543 / DSM 1740 / CCUG 13145 / JCM 31913 / LMG 7466 / NCTC 11488 / FDC 602W) (Vibrio succinogenes).